A 241-amino-acid polypeptide reads, in one-letter code: Terpene cyclase terB (241 aa).

The next 5 helical transmembrane spans lie at 19–39, 48–68, 75–95, 114–134, and 137–157; these read LADT…GAMI, YCMG…YTLV, VELA…FAAT, LIFL…AAEI, and ALAY…GGVC. A glycan (N-linked (GlcNAc...) asparagine) is linked at asparagine 163. Helical transmembrane passes span 169-189 and 198-218; these read SVTL…FAFL and FAWL…LADI.

Belongs to the paxB family.

Its subcellular location is the membrane. Its pathway is secondary metabolite biosynthesis. Terpene cyclase; part of the gene cluster that mediates the biosynthesis of terpendoles, indole-diterpene (IDT) mycotoxins including terpendole I, terpendole K, terpendole C, as well as the kinesin Eg5 inhibitor terpendole E. Terpendoles biosynthesis begins with the synthesis of geranylgeranyl diphosphate (GGPP) by a yet unidentified GGPP synthase. Condensation of indole-3-glycerol phosphate with GGPP by the prenyltransferase terC then forms 3-geranylgeranylindole (3-GGI), followed by epoxidation and cyclization of this intermediate (by the FAD-dependent monooxygeanse terM and the terpene cyclase terB) to form paspaline. The cytochrome monooxygenase terQ then hydroxylates paspalline at C-11 to yield terpendole E. The cytochrome monooxygenase terP converts terpendole E to 13-desoxyterpendole I, and terQ converts 13-desoxyterpendole I into terpendole I. TerF and terK are required for conversion of terpendole I to terpendole C which is further converted to terpendole K. The chain is Terpene cyclase terB from Tolypocladium album (Soil fungus).